Consider the following 270-residue polypeptide: Thymidine kinase 2, mitochondrial (270 aa).

The transit peptide at 1–38 directs the protein to the mitochondrion; that stretch reads MLLRSLRSWAARSPRSVGPGSSGSPGSLDSGAGPLWAP. The segment at 1–54 is disordered; that stretch reads MLLRSLRSWAARSPRSVGPGSSGSPGSLDSGAGPLWAPRRAWPPDKDRENDKEK. Over residues 13 to 34 the composition is skewed to low complexity; it reads SPRSVGPGSSGSPGSLDSGAGP. Residues 42-54 are compositionally biased toward basic and acidic residues; sequence WPPDKDRENDKEK. 62-70 contacts ATP; it reads GNIASGKTT. Glu-138 acts as the Proton acceptor in catalysis.

Belongs to the DCK/DGK family. Homodimer. Found in most tissues; highly expressed in liver.

Its subcellular location is the mitochondrion. The catalysed reaction is thymidine + ATP = dTMP + ADP + H(+). It carries out the reaction 2'-deoxycytidine + ATP = dCMP + ADP + H(+). The enzyme catalyses 2'-deoxyuridine + ATP = dUMP + ADP + H(+). In terms of biological role, phosphorylates thymidine, deoxycytidine, and deoxyuridine in the mitochondrial matrix. In non-replicating cells, where cytosolic dNTP synthesis is down-regulated, mtDNA synthesis depends solely on TK2 and DGUOK. The sequence is that of Thymidine kinase 2, mitochondrial (Tk2) from Mus musculus (Mouse).